Here is a 340-residue protein sequence, read N- to C-terminus: Cytochrome P450 monooxygenase cheG (340 aa).

N-linked (GlcNAc...) asparagine glycosylation occurs at asparagine 25. Residues methionine 37–isoleucine 57 traverse the membrane as a helical segment. Cysteine 283 contacts heme. The disordered stretch occupies residues leucine 308–leucine 340. An N-linked (GlcNAc...) asparagine glycan is attached at asparagine 322.

The protein belongs to the cytochrome P450 family. It depends on heme as a cofactor.

The protein localises to the membrane. Its pathway is secondary metabolite biosynthesis. In terms of biological role, cytochrome P450 monooxygenase; part of the gene cluster that mediates the biosynthesis of chaetoglobosin A which has a unique inhibitory activity against actin polymerization in mammalian cells. Chaetoglobosin A and its intermediates are involved in the morphological differentiation of C.globosum. The first step of the pathway is the synthesis of prochaetoglobosin I via condensation of one acetyl-CoA, 8 malonyl-CoA, and a L-tryptophan molecule by the PKS-NRPS hybrid synthetase cheA, followed by reduction of backbone double bond to install desired geometry by the enoyl reductase cheB. Further multiple oxidation steps performed by the cytochrome P450 monooxygenases cheE and cheG, as well as by the FAD-linked oxidoreductase cheF, lead to the formation of chaetoglobosin A. Depending on the order of action of these reductases, distinct intermediates can be identified. Within the pathway, the cytochrome P450 monooxygenase cheE catalyzes a stereospecific epoxidation on prochaetoglobosin I, cytoglobosin D, and chaetoglobosin J intermediates. The FAD-linked oxidoreductase cheF performs dehydrogenation of the C-20 hydroxyl groups in the 20-dihyrochaetoglobosin A and cytoglobosin D intermediates. Finally, the cytochrome P450 monooxygenase cheG can catalyze the stereospecific dihydroxylation of prochaetoglobosin I and prochaetoglobosin IV at C-19 and C-20, respectively. The Diels-Alderase cheD may play a role in the post-PKS-NRPS biosynthetic steps catalyzing Diels-Alder cyclization. The polypeptide is Cytochrome P450 monooxygenase cheG (Chaetomium globosum (strain ATCC 6205 / CBS 148.51 / DSM 1962 / NBRC 6347 / NRRL 1970) (Soil fungus)).